Here is a 163-residue protein sequence, read N- to C-terminus: Glutathione peroxidase 2 (163 aa).

C36 is an active-site residue.

Belongs to the glutathione peroxidase family.

Its subcellular location is the cytoplasm. It carries out the reaction 2 glutathione + H2O2 = glutathione disulfide + 2 H2O. Its function is as follows. May constitute a glutathione peroxidase-like protective system against oxidative stresses. This is Glutathione peroxidase 2 (gpx-2) from Caenorhabditis elegans.